Consider the following 690-residue polypeptide: UvrABC system protein C (690 aa).

Residues 15–94 (TDPGVYTFRD…IKRFNPRFNV (80 aa)) form the GIY-YIG domain. Residues 207–242 (EPVLRRVRKEMEQASENLDFERAASLRDQLQAMQKS) enclose the UVR domain.

Belongs to the UvrC family. In terms of assembly, interacts with UvrB in an incision complex.

The protein resides in the cytoplasm. Its function is as follows. The UvrABC repair system catalyzes the recognition and processing of DNA lesions. UvrC both incises the 5' and 3' sides of the lesion. The N-terminal half is responsible for the 3' incision and the C-terminal half is responsible for the 5' incision. The polypeptide is UvrABC system protein C (Corynebacterium jeikeium (strain K411)).